The primary structure comprises 124 residues: Large ribosomal subunit protein bL12 (124 aa).

It belongs to the bacterial ribosomal protein bL12 family. In terms of assembly, homodimer. Part of the ribosomal stalk of the 50S ribosomal subunit. Forms a multimeric L10(L12)X complex, where L10 forms an elongated spine to which 2 to 4 L12 dimers bind in a sequential fashion. Binds GTP-bound translation factors.

Forms part of the ribosomal stalk which helps the ribosome interact with GTP-bound translation factors. Is thus essential for accurate translation. The sequence is that of Large ribosomal subunit protein bL12 from Janthinobacterium sp. (strain Marseille) (Minibacterium massiliensis).